Reading from the N-terminus, the 144-residue chain is Large ribosomal subunit protein uL11 (144 aa).

It belongs to the universal ribosomal protein uL11 family. As to quaternary structure, part of the ribosomal stalk of the 50S ribosomal subunit. Interacts with L10 and the large rRNA to form the base of the stalk. L10 forms an elongated spine to which L12 dimers bind in a sequential fashion forming a multimeric L10(L12)X complex. Post-translationally, one or more lysine residues are methylated.

Its function is as follows. Forms part of the ribosomal stalk which helps the ribosome interact with GTP-bound translation factors. This is Large ribosomal subunit protein uL11 from Frankia alni (strain DSM 45986 / CECT 9034 / ACN14a).